The sequence spans 458 residues: tRNA modification GTPase MnmE (458 aa).

3 residues coordinate (6S)-5-formyl-5,6,7,8-tetrahydrofolate: Arg-23, Glu-80, and Lys-122. In terms of domain architecture, TrmE-type G spans 218 to 380 (GMKIVIAGRP…LREHLQQTMG (163 aa)). A K(+)-binding site is contributed by Asn-228. GTP is bound by residues 228–233 (NVGKSS), 247–253 (TQIPGTT), 272–275 (DTAG), and 361–363 (SAR). Ser-232 contributes to the Mg(2+) binding site. Residues Thr-247, Ile-249, and Thr-252 each coordinate K(+). Thr-253 provides a ligand contact to Mg(2+). Residue Lys-458 coordinates (6S)-5-formyl-5,6,7,8-tetrahydrofolate.

It belongs to the TRAFAC class TrmE-Era-EngA-EngB-Septin-like GTPase superfamily. TrmE GTPase family. Homodimer. Heterotetramer of two MnmE and two MnmG subunits. Requires K(+) as cofactor.

The protein resides in the cytoplasm. Functionally, exhibits a very high intrinsic GTPase hydrolysis rate. Involved in the addition of a carboxymethylaminomethyl (cmnm) group at the wobble position (U34) of certain tRNAs, forming tRNA-cmnm(5)s(2)U34. This is tRNA modification GTPase MnmE from Hamiltonella defensa subsp. Acyrthosiphon pisum (strain 5AT).